Here is a 686-residue protein sequence, read N- to C-terminus: Proprotein convertase subtilisin/kexin type 9 (686 aa).

A signal peptide spans 1–28; the sequence is MGTVSSRRLWWPLPLLLLLLLGPAGTRA. A propeptide spanning residues 29-150 is cleaved from the precursor; sequence QEDDDDDYEE…IEEDSSVFAQ (122 aa). At tyrosine 36 the chain carries Sulfotyrosine. Serine 45 bears the Phosphoserine mark. The region spanning 75–147 is the Inhibitor I9 domain; the sequence is TYVVVLKEET…VDYIEEDSSV (73 aa). The region spanning 153–459 is the Peptidase S8 domain; that stretch reads PWNLERITPA…GWQLFCRTVW (307 aa). Residues aspartate 184 and histidine 224 each act as charge relay system in the active site. 2 disulfides stabilise this stretch: cysteine 221–cysteine 253 and cysteine 321–cysteine 356. The active-site Charge relay system is serine 384. The tract at residues 448-686 is C-terminal domain; that stretch reads GEGWQLFCRT…CRSQHLAQAS (239 aa). Intrachain disulfides connect cysteine 455–cysteine 525, cysteine 475–cysteine 524, and cysteine 484–cysteine 507. A glycan (N-linked (GlcNAc...) asparagine) is linked at asparagine 531. Disulfide bonds link cysteine 532–cysteine 599, cysteine 550–cysteine 598, cysteine 560–cysteine 586, cysteine 606–cysteine 677, cysteine 624–cysteine 676, and cysteine 633–cysteine 652. Position 686 is a phosphoserine (serine 686).

It belongs to the peptidase S8 family. Monomer. Can self-associate to form dimers and higher multimers which may have increased LDLR degrading activity. The precursor protein but not the mature protein may form multimers. Interacts with APOB, VLDLR, LRP8/APOER2 and BACE1. The full-length immature form (pro-PCSK9) interacts with SCNN1A, SCNN1B and SCNN1G. The pro-PCSK9 form (via C-terminal domain) interacts with LDLR. Interacts (via the C-terminal domain) with ANXA2 (via repeat Annexin 1); the interaction inhibits the degradation of LDLR. Ca(2+) serves as cofactor. Cleavage by furin and PCSK5 generates a truncated inactive protein that is unable to induce LDLR degradation. Post-translationally, undergoes autocatalytic cleavage in the endoplasmic reticulum to release the propeptide from the N-terminus and the cleavage of the propeptide is strictly required for its maturation and activation. The cleaved propeptide however remains associated with the catalytic domain through non-covalent interactions, preventing potential substrates from accessing its active site. As a result, it is secreted from cells as a propeptide-containing, enzymatically inactive protein. In terms of processing, phosphorylation protects the propeptide against proteolysis.

The protein resides in the cytoplasm. It is found in the secreted. It localises to the endosome. The protein localises to the lysosome. Its subcellular location is the cell surface. The protein resides in the endoplasmic reticulum. It is found in the golgi apparatus. With respect to regulation, its proteolytic activity is autoinhibited by the non-covalent binding of the propeptide to the catalytic domain. Inhibited by EGTA. Functionally, crucial player in the regulation of plasma cholesterol homeostasis. Binds to low-density lipid receptor family members: low density lipoprotein receptor (LDLR), very low density lipoprotein receptor (VLDLR), apolipoprotein E receptor (LRP1/APOER) and apolipoprotein receptor 2 (LRP8/APOER2), and promotes their degradation in intracellular acidic compartments. Acts via a non-proteolytic mechanism to enhance the degradation of the hepatic LDLR through a clathrin LDLRAP1/ARH-mediated pathway. May prevent the recycling of LDLR from endosomes to the cell surface or direct it to lysosomes for degradation. Can induce ubiquitination of LDLR leading to its subsequent degradation. Inhibits intracellular degradation of APOB via the autophagosome/lysosome pathway in a LDLR-independent manner. Involved in the disposal of non-acetylated intermediates of BACE1 in the early secretory pathway. Inhibits epithelial Na(+) channel (ENaC)-mediated Na(+) absorption by reducing ENaC surface expression primarily by increasing its proteasomal degradation. Regulates neuronal apoptosis via modulation of LRP8/APOER2 levels and related anti-apoptotic signaling pathways. The chain is Proprotein convertase subtilisin/kexin type 9 (PCSK9) from Saguinus labiatus (Red-chested mustached tamarin).